Here is a 367-residue protein sequence, read N- to C-terminus: Probable dual-specificity RNA methyltransferase RlmN (367 aa).

The Proton acceptor role is filled by glutamate 92. Residues 98-326 (QEYGLSVCVT…YDTLKKNGIN (229 aa)) form the Radical SAM core domain. Residues cysteine 105 and cysteine 341 are joined by a disulfide bond. Residues cysteine 112, cysteine 116, and cysteine 119 each contribute to the [4Fe-4S] cluster site. Residues 164-165 (GE), serine 196, 219-221 (SLH), and asparagine 297 contribute to the S-adenosyl-L-methionine site. Catalysis depends on cysteine 341, which acts as the S-methylcysteine intermediate.

The protein belongs to the radical SAM superfamily. RlmN family. Requires [4Fe-4S] cluster as cofactor.

The protein localises to the cytoplasm. It catalyses the reaction adenosine(2503) in 23S rRNA + 2 reduced [2Fe-2S]-[ferredoxin] + 2 S-adenosyl-L-methionine = 2-methyladenosine(2503) in 23S rRNA + 5'-deoxyadenosine + L-methionine + 2 oxidized [2Fe-2S]-[ferredoxin] + S-adenosyl-L-homocysteine. It carries out the reaction adenosine(37) in tRNA + 2 reduced [2Fe-2S]-[ferredoxin] + 2 S-adenosyl-L-methionine = 2-methyladenosine(37) in tRNA + 5'-deoxyadenosine + L-methionine + 2 oxidized [2Fe-2S]-[ferredoxin] + S-adenosyl-L-homocysteine. Specifically methylates position 2 of adenine 2503 in 23S rRNA and position 2 of adenine 37 in tRNAs. The chain is Probable dual-specificity RNA methyltransferase RlmN from Listeria monocytogenes serovar 1/2a (strain ATCC BAA-679 / EGD-e).